Reading from the N-terminus, the 321-residue chain is Aldose reductase C (321 aa).

Residue 22–31 (GNQIPSIGLG) coordinates NADP(+). Y62 serves as the catalytic Proton donor. H124 lines the substrate pocket. 227 to 281 (SPLGQGKCDFFSNKILKSIAGKYKKSVANVIFKWLNQRGIAAIPKSGNHSRIIEN) serves as a coordination point for NADP(+).

Belongs to the aldo/keto reductase family.

The catalysed reaction is an alditol + NAD(+) = an aldose + NADH + H(+). It catalyses the reaction an alditol + NADP(+) = an aldose + NADPH + H(+). Catalyzes the NADPH-dependent reduction of a wide variety of carbonyl-containing compounds to their corresponding alcohols with a broad range of catalytic efficiencies. The polypeptide is Aldose reductase C (alrC) (Dictyostelium discoideum (Social amoeba)).